A 349-amino-acid polypeptide reads, in one-letter code: MTEFDNLTWLHGKPQGSGLLKANPEDFVVVEDLGFTPDGEGEHILLRILKNGCNTRFVADALAKFLKIHAREVSFAGQKDKHAVTEQWLCARVPGKEMPDFSAFQLEGCKVLEYARHKRKLRLGALKGNAFTLVLREISDRRDVETRLQAIRDGGVPNYFGAQRFGIGGSNLQGALRWAQSNAPVRDRNKRSFWLSAARSALFNQIVHQRLKKPDFNQVVDGDALQLAGRGSWFVATSEELPELQRRVDEKELMITASLPGSGEWGTQRAALAFEQDAIAQETVLQSLLLREKVEASRRAMLLYPQQLSWNWWDDVTVELRFWLPAGSFATSVVRELINTMGDYAHIAE.

Phenylalanine 27 provides a ligand contact to substrate. Aspartate 80 functions as the Nucleophile in the catalytic mechanism. Substrate is bound at residue asparagine 129. The TRUD domain maps to 155–303 (GVPNYFGAQR…VEASRRAMLL (149 aa)). Position 329 (phenylalanine 329) interacts with substrate.

Belongs to the pseudouridine synthase TruD family.

It carries out the reaction uridine(13) in tRNA = pseudouridine(13) in tRNA. Responsible for synthesis of pseudouridine from uracil-13 in transfer RNAs. The sequence is that of tRNA pseudouridine synthase D from Salmonella dublin (strain CT_02021853).